A 160-amino-acid polypeptide reads, in one-letter code: Cyclic pyranopterin monophosphate synthase (160 aa).

Substrate contacts are provided by residues 75–77 (MCH) and 116–117 (ME). Aspartate 131 is an active-site residue.

Belongs to the MoaC family. As to quaternary structure, homohexamer; trimer of dimers.

The catalysed reaction is (8S)-3',8-cyclo-7,8-dihydroguanosine 5'-triphosphate = cyclic pyranopterin phosphate + diphosphate. Its pathway is cofactor biosynthesis; molybdopterin biosynthesis. Its function is as follows. Catalyzes the conversion of (8S)-3',8-cyclo-7,8-dihydroguanosine 5'-triphosphate to cyclic pyranopterin monophosphate (cPMP). In Staphylococcus haemolyticus (strain JCSC1435), this protein is Cyclic pyranopterin monophosphate synthase.